A 289-amino-acid chain; its full sequence is Poly-beta-1,6-N-acetyl-D-glucosamine N-deacetylase (289 aa).

A signal peptide spans M1–A30. Residues R113–K289 enclose the NodB homology domain.

Belongs to the polysaccharide deacetylase family.

Its subcellular location is the secreted. The protein localises to the cell wall. Catalyzes the N-deacetylation of poly-beta-1,6-N-acetyl-D-glucosamine (PNAG, also referred to as PIA), a biofilm adhesin polysaccharide. In fact, the IcaB deacetylase converts 15 to 20% of the GlcNAc residues of PNAG to glucosamine. N-deacetylation is crucial for attachment of the polysaccharide to the bacterial cell surface; it leads to the introduction of positive charges in the otherwise neutral PIA polymer, allowing electrostatic interactions. Deacetylation of the polymer is also essential for key virulence mechanisms of S.epidermidis, namely biofilm formation, colonization, and resistance to neutrophil phagocytosis and human antibacterial peptides. The chain is Poly-beta-1,6-N-acetyl-D-glucosamine N-deacetylase (icaB) from Staphylococcus epidermidis (strain ATCC 35984 / DSM 28319 / BCRC 17069 / CCUG 31568 / BM 3577 / RP62A).